The following is a 109-amino-acid chain: UPF0060 membrane protein RHA1_ro06609 (109 aa).

The next 4 membrane-spanning stretches (helical) occupy residues 7–27, 33–53, 62–82, and 88–108; these read VALFAVAALFEIGGAWLVWQG, GWIWIGAGVAALGAYGFVATL, ILAAYGGVFVAGSLIWGMVAD, and RWDVSGALICLLGMAVIMYAP.

It belongs to the UPF0060 family.

It localises to the cell membrane. This is UPF0060 membrane protein RHA1_ro06609 from Rhodococcus jostii (strain RHA1).